A 474-amino-acid polypeptide reads, in one-letter code: B-cell CLL/lymphoma 6 member B protein (474 aa).

Residues 38–105 (TDVTLLVGGQ…MYTSRLRLSP (68 aa)) enclose the BTB domain. 2 disordered regions span residues 144–190 (PVEV…PDPK) and 210–249 (GSLV…GLQS). Pro residues predominate over residues 150–160 (PRPPTVAPPGS). The span at 162-172 (RRSEGHPDPPT) shows a compositional bias: basic and acidic residues. Polar residues-rich tracts occupy residues 173 to 183 (ESRSCSQGSPS), 210 to 220 (GSLVGESSGQP), and 240 to 249 (EEGTTPGLQS). 5 C2H2-type zinc fingers span residues 323 to 345 (YKCQ…RTVH), 351 to 373 (YRCS…SRIH), 379 to 401 (YKCE…VLIH), 407 to 429 (YPCP…VRIH), and 435 to 458 (YHCD…RQKH).

As to quaternary structure, associates with BCL6 through the BTB domain. Ubiquitously expressed with higher expression found in heart and lung.

The protein resides in the nucleus. Its function is as follows. Acts as a sequence-specific transcriptional repressor in association with BCL6. Necessary for activation of naive T-cells to antigenic stimulation. May attenuate the regulatory effect of BCL6 on antigenic activation of naive CD4 T-cells by forming a heterodimer with BCL6. The polypeptide is B-cell CLL/lymphoma 6 member B protein (Bcl6b) (Mus musculus (Mouse)).